The primary structure comprises 348 residues: UPF0283 membrane protein PBPRA2435 (348 aa).

A run of 3 helical transmembrane segments spans residues 71–91 (GLLI…VVSA), 97–117 (WLAL…ITAL), and 211–231 (EAAV…LVAW).

The protein belongs to the UPF0283 family.

The protein localises to the cell inner membrane. This is UPF0283 membrane protein PBPRA2435 from Photobacterium profundum (strain SS9).